The following is a 301-amino-acid chain: HPr kinase/phosphorylase (301 aa).

Active-site residues include His-134 and Lys-155. An ATP-binding site is contributed by 149–156 (GKSGLGKS). Ser-156 lines the Mg(2+) pocket. The Proton acceptor; for phosphorylation activity. Proton donor; for dephosphorylation activity role is filled by Asp-173. Residues 196 to 205 (LEVRGLGIIN) form an important for the catalytic mechanism of both phosphorylation and dephosphorylation region. Residue Glu-197 participates in Mg(2+) binding. The active site involves Arg-239. The interval 260-265 (PITPGK) is important for the catalytic mechanism of dephosphorylation.

It belongs to the HPrK/P family. As to quaternary structure, homohexamer. The cofactor is Mg(2+).

It carries out the reaction [HPr protein]-L-serine + ATP = [HPr protein]-O-phospho-L-serine + ADP + H(+). The catalysed reaction is [HPr protein]-O-phospho-L-serine + phosphate + H(+) = [HPr protein]-L-serine + diphosphate. Its function is as follows. Catalyzes the ATP- as well as the pyrophosphate-dependent phosphorylation of a specific serine residue in HPr, a phosphocarrier protein of the phosphoenolpyruvate-dependent sugar phosphotransferase system (PTS). HprK/P also catalyzes the pyrophosphate-producing, inorganic phosphate-dependent dephosphorylation (phosphorolysis) of seryl-phosphorylated HPr (P-Ser-HPr). The two antagonistic activities of HprK/P are regulated by several intracellular metabolites, which change their concentration in response to the absence or presence of rapidly metabolisable carbon sources (glucose, fructose, etc.) in the growth medium. Therefore, by controlling the phosphorylation state of HPr, HPrK/P is a sensor enzyme that plays a major role in the regulation of carbon metabolism and sugar transport: it mediates carbon catabolite repression (CCR), and regulates PTS-catalyzed carbohydrate uptake and inducer exclusion. The protein is HPr kinase/phosphorylase of Malacoplasma penetrans (strain HF-2) (Mycoplasma penetrans).